A 118-amino-acid chain; its full sequence is Phospholipase A2 'basic' (118 aa).

Cystine bridges form between cysteine 11–cysteine 70, cysteine 26–cysteine 117, cysteine 28–cysteine 44, cysteine 43–cysteine 98, cysteine 50–cysteine 91, cysteine 59–cysteine 84, and cysteine 77–cysteine 89. Ca(2+) contacts are provided by tyrosine 27, glycine 29, and glycine 31. Histidine 47 is an active-site residue. Residue aspartate 48 coordinates Ca(2+). The Coagulation factor Xa binding motif motif lies at glutamate 52–lysine 69. Aspartate 92 is a catalytic residue.

It belongs to the phospholipase A2 family. Group I subfamily. D49 sub-subfamily. Requires Ca(2+) as cofactor. In terms of tissue distribution, expressed by the venom gland.

The protein localises to the secreted. It carries out the reaction a 1,2-diacyl-sn-glycero-3-phosphocholine + H2O = a 1-acyl-sn-glycero-3-phosphocholine + a fatty acid + H(+). Functionally, snake venom phospholipase A2 (PLA2) that shows strong anticoagulant activity. Binds directly with the coagulation factor FXa (F10) and blocks the formation of the prothombinase complex. Acts by a nonenzymatic mechanism. Also inhibits the complex composed of tissue factor (F3) and coagulation factor VIIa (F7) (TF-VIIa complex) by both enzymatic and nonenzymatic mechanisms. PLA2 catalyzes the calcium-dependent hydrolysis of the 2-acyl groups in 3-sn-phosphoglycerides. In Naja nigricollis (Black-necked spitting cobra), this protein is Phospholipase A2 'basic'.